The sequence spans 166 residues: EndA-like protein (166 aa).

Belongs to the tRNA-intron endonuclease family. Archaeal short subfamily.

This Methanopyrus kandleri (strain AV19 / DSM 6324 / JCM 9639 / NBRC 100938) protein is EndA-like protein.